The following is a 377-amino-acid chain: Nitric oxide reductase FlRd-NAD(+) reductase (377 aa).

Belongs to the FAD-dependent oxidoreductase family. FAD is required as a cofactor.

The protein resides in the cytoplasm. The enzyme catalyses 2 reduced [nitric oxide reductase rubredoxin domain] + NAD(+) + H(+) = 2 oxidized [nitric oxide reductase rubredoxin domain] + NADH. It functions in the pathway nitrogen metabolism; nitric oxide reduction. One of at least two accessory proteins for anaerobic nitric oxide (NO) reductase. Reduces the rubredoxin moiety of NO reductase. This is Nitric oxide reductase FlRd-NAD(+) reductase from Shigella dysenteriae serotype 1 (strain Sd197).